We begin with the raw amino-acid sequence, 361 residues long: Phosphoserine aminotransferase (361 aa).

An L-glutamate-binding site is contributed by arginine 43. Pyridoxal 5'-phosphate is bound by residues 77 to 78, tryptophan 103, threonine 153, aspartate 173, and glutamine 196; that span reads AS. Lysine 197 is subject to N6-(pyridoxal phosphate)lysine. 238-239 is a binding site for pyridoxal 5'-phosphate; that stretch reads NT.

This sequence belongs to the class-V pyridoxal-phosphate-dependent aminotransferase family. SerC subfamily. Homodimer. It depends on pyridoxal 5'-phosphate as a cofactor.

It localises to the cytoplasm. The catalysed reaction is O-phospho-L-serine + 2-oxoglutarate = 3-phosphooxypyruvate + L-glutamate. The enzyme catalyses 4-(phosphooxy)-L-threonine + 2-oxoglutarate = (R)-3-hydroxy-2-oxo-4-phosphooxybutanoate + L-glutamate. It participates in amino-acid biosynthesis; L-serine biosynthesis; L-serine from 3-phospho-D-glycerate: step 2/3. It functions in the pathway cofactor biosynthesis; pyridoxine 5'-phosphate biosynthesis; pyridoxine 5'-phosphate from D-erythrose 4-phosphate: step 3/5. Its function is as follows. Catalyzes the reversible conversion of 3-phosphohydroxypyruvate to phosphoserine and of 3-hydroxy-2-oxo-4-phosphonooxybutanoate to phosphohydroxythreonine. The protein is Phosphoserine aminotransferase of Pseudomonas paraeruginosa (strain DSM 24068 / PA7) (Pseudomonas aeruginosa (strain PA7)).